The chain runs to 358 residues: Methylthioribose-1-phosphate isomerase (358 aa).

Substrate is bound by residues 54–56 (RGA), Arg96, and Gln205. Asp246 serves as the catalytic Proton donor. 256–257 (NK) contributes to the substrate binding site.

Belongs to the eIF-2B alpha/beta/delta subunits family. MtnA subfamily.

The catalysed reaction is 5-(methylsulfanyl)-alpha-D-ribose 1-phosphate = 5-(methylsulfanyl)-D-ribulose 1-phosphate. Its pathway is amino-acid biosynthesis; L-methionine biosynthesis via salvage pathway; L-methionine from S-methyl-5-thio-alpha-D-ribose 1-phosphate: step 1/6. Functionally, catalyzes the interconversion of methylthioribose-1-phosphate (MTR-1-P) into methylthioribulose-1-phosphate (MTRu-1-P). The sequence is that of Methylthioribose-1-phosphate isomerase from Stutzerimonas stutzeri (strain A1501) (Pseudomonas stutzeri).